The sequence spans 78 residues: Conotoxin 5 (78 aa).

Positions 1 to 22 are cleaved as a signal peptide; that stretch reads MKLTCMMIVTVLFLTAWIFITA. Residues 23–49 constitute a propeptide that is removed on maturation; it reads DNSRNGIENLPRMRRHEMKNPKASKLN. Cystine bridges form between C53–C69, C60–C73, and C68–C77.

It belongs to the conotoxin O1 superfamily. As to expression, expressed by the venom duct.

The protein resides in the secreted. The sequence is that of Conotoxin 5 from Conus imperialis (Imperial cone).